We begin with the raw amino-acid sequence, 269 residues long: Formamidopyrimidine-DNA glycosylase (269 aa).

Pro2 functions as the Schiff-base intermediate with DNA in the catalytic mechanism. Glu3 (proton donor) is an active-site residue. Lys57 acts as the Proton donor; for beta-elimination activity in catalysis. Residues His90, Arg109, and Lys150 each coordinate DNA. The FPG-type zinc finger occupies 235 to 269 (QVYGRKGEPCRVCGTPIVATKHAQRATFYCRHCQK). Arg259 serves as the catalytic Proton donor; for delta-elimination activity.

The protein belongs to the FPG family. In terms of assembly, monomer. Zn(2+) is required as a cofactor.

It catalyses the reaction Hydrolysis of DNA containing ring-opened 7-methylguanine residues, releasing 2,6-diamino-4-hydroxy-5-(N-methyl)formamidopyrimidine.. The catalysed reaction is 2'-deoxyribonucleotide-(2'-deoxyribose 5'-phosphate)-2'-deoxyribonucleotide-DNA = a 3'-end 2'-deoxyribonucleotide-(2,3-dehydro-2,3-deoxyribose 5'-phosphate)-DNA + a 5'-end 5'-phospho-2'-deoxyribonucleoside-DNA + H(+). Its function is as follows. Involved in base excision repair of DNA damaged by oxidation or by mutagenic agents. Acts as a DNA glycosylase that recognizes and removes damaged bases. Has a preference for oxidized purines, such as 7,8-dihydro-8-oxoguanine (8-oxoG). Has AP (apurinic/apyrimidinic) lyase activity and introduces nicks in the DNA strand. Cleaves the DNA backbone by beta-delta elimination to generate a single-strand break at the site of the removed base with both 3'- and 5'-phosphates. This is Formamidopyrimidine-DNA glycosylase from Salmonella agona (strain SL483).